The following is a 464-amino-acid chain: Zinc transporter 6 (464 aa).

Residues 1-33 (MGTIYLFRKTQRSLLGKLTQEFRLVTADRRSWK) are Cytoplasmic-facing. The helical transmembrane segment at 34-54 (ILLFGAINVVCTGFLLTWCSS) threads the bilayer. Residues 55–64 (TNSMALTAYT) lie on the Extracellular side of the membrane. A helical transmembrane segment spans residues 65–85 (YLTIFDLFSLITCLISYWVMM). At 86–98 (KKPSPTYSFGFER) the chain is on the cytoplasmic side. The helical transmembrane segment at 99 to 119 (FEVLSVFASTVLAQLGALFIL) threads the bilayer. Over 120–134 (KESAERFVEQPEIHT) the chain is Extracellular. The chain crosses the membrane as a helical span at residues 135–155 (GRLLVGTFVALCFNLFSMLSI). At 156 to 200 (RNKPFAYVSEAASTSWLQEHVADLSRSLCGIIPGLSSIFLPRMNP) the chain is on the cytoplasmic side. The helical transmembrane segment at 201–221 (FVLIDIAGALALCITYMLIEI) threads the bilayer. Over 222–228 (NNYFAVD) the chain is Extracellular. The helical transmembrane segment at 229–249 (TASAIAIAVMTFGTMYPMSVY) threads the bilayer. Residues 250 to 464 (SGKVLLQTTP…TPGQFTQFKQ (215 aa)) lie on the Cytoplasmic side of the membrane.

It belongs to the cation diffusion facilitator (CDF) transporter (TC 2.A.4) family. SLC30A subfamily. In terms of assembly, heterodimer with SLC30A5; form a functional zinc ion transmembrane transporter.

It localises to the golgi apparatus. Its subcellular location is the trans-Golgi network membrane. Its function is as follows. Has probably no intrinsic transporter activity but together with SLC30A5 forms a functional zinc ion:proton antiporter heterodimer, mediating zinc entry into the lumen of organelles along the secretory pathway. As part of that zinc ion:proton antiporter, contributes to zinc ion homeostasis within the early secretory pathway and regulates the activation and folding of enzymes like alkaline phosphatases and enzymes involved in phosphatidylinositol glycan anchor biosynthesis. The sequence is that of Zinc transporter 6 (slc30a6) from Xenopus tropicalis (Western clawed frog).